The following is a 276-amino-acid chain: NH(3)-dependent NAD(+) synthetase (276 aa).

43–50 (GISGGVDS) is an ATP binding site. A Mg(2+)-binding site is contributed by Asp-49. Arg-146 lines the deamido-NAD(+) pocket. ATP is bound at residue Thr-166. Position 171 (Glu-171) interacts with Mg(2+). Deamido-NAD(+) contacts are provided by Lys-179 and Asp-186. Residues Lys-195 and Thr-217 each contribute to the ATP site. 266-267 (HK) serves as a coordination point for deamido-NAD(+).

This sequence belongs to the NAD synthetase family. Homodimer.

The catalysed reaction is deamido-NAD(+) + NH4(+) + ATP = AMP + diphosphate + NAD(+) + H(+). The protein operates within cofactor biosynthesis; NAD(+) biosynthesis; NAD(+) from deamido-NAD(+) (ammonia route): step 1/1. Catalyzes the ATP-dependent amidation of deamido-NAD to form NAD. Uses ammonia as a nitrogen source. This chain is NH(3)-dependent NAD(+) synthetase, found in Shewanella sediminis (strain HAW-EB3).